The following is a 511-amino-acid chain: ATP synthase subunit alpha (511 aa).

170-177 contacts ATP; that stretch reads GDRQTGKT.

This sequence belongs to the ATPase alpha/beta chains family. In terms of assembly, F-type ATPases have 2 components, CF(1) - the catalytic core - and CF(0) - the membrane proton channel. CF(1) has five subunits: alpha(3), beta(3), gamma(1), delta(1), epsilon(1). CF(0) has three main subunits: a(1), b(2) and c(9-12). The alpha and beta chains form an alternating ring which encloses part of the gamma chain. CF(1) is attached to CF(0) by a central stalk formed by the gamma and epsilon chains, while a peripheral stalk is formed by the delta and b chains.

Its subcellular location is the cell inner membrane. It carries out the reaction ATP + H2O + 4 H(+)(in) = ADP + phosphate + 5 H(+)(out). Produces ATP from ADP in the presence of a proton gradient across the membrane. The alpha chain is a regulatory subunit. The sequence is that of ATP synthase subunit alpha from Pelagibacter ubique (strain HTCC1062).